We begin with the raw amino-acid sequence, 717 residues long: Fatty acid oxidation complex subunit alpha (717 aa).

The tract at residues 1–190 (MIHAGNAITV…KDGAVDAVVA (190 aa)) is enoyl-CoA hydratase/isomerase. Position 298 (Asp-298) interacts with substrate. Positions 313–717 (HPVNQAAVLG…MAANNKKFYG (405 aa)) are 3-hydroxyacyl-CoA dehydrogenase. NAD(+) is bound by residues Met-326, Asp-345, 402 to 404 (VTE), Lys-409, and Ser-431. The active-site For 3-hydroxyacyl-CoA dehydrogenase activity is the His-452. Residue Asn-455 participates in NAD(+) binding. Asn-502 serves as a coordination point for substrate.

This sequence in the N-terminal section; belongs to the enoyl-CoA hydratase/isomerase family. In the C-terminal section; belongs to the 3-hydroxyacyl-CoA dehydrogenase family. As to quaternary structure, heterotetramer of two alpha chains (FadB) and two beta chains (FadA).

It carries out the reaction a (3S)-3-hydroxyacyl-CoA + NAD(+) = a 3-oxoacyl-CoA + NADH + H(+). It catalyses the reaction a (3S)-3-hydroxyacyl-CoA = a (2E)-enoyl-CoA + H2O. The catalysed reaction is a 4-saturated-(3S)-3-hydroxyacyl-CoA = a (3E)-enoyl-CoA + H2O. The enzyme catalyses (3S)-3-hydroxybutanoyl-CoA = (3R)-3-hydroxybutanoyl-CoA. It carries out the reaction a (3Z)-enoyl-CoA = a 4-saturated (2E)-enoyl-CoA. It catalyses the reaction a (3E)-enoyl-CoA = a 4-saturated (2E)-enoyl-CoA. Its pathway is lipid metabolism; fatty acid beta-oxidation. In terms of biological role, involved in the aerobic and anaerobic degradation of long-chain fatty acids via beta-oxidation cycle. Catalyzes the formation of 3-oxoacyl-CoA from enoyl-CoA via L-3-hydroxyacyl-CoA. It can also use D-3-hydroxyacyl-CoA and cis-3-enoyl-CoA as substrate. This is Fatty acid oxidation complex subunit alpha from Acinetobacter baumannii (strain SDF).